A 108-amino-acid polypeptide reads, in one-letter code: Probable chaperone-like protein YdbL (108 aa).

An N-terminal signal peptide occupies residues 1 to 21 (MKKTLLLCAFLVGLVSSNVMA).

Its subcellular location is the periplasm. Its function is as follows. Probably acts as a chaperone-like protein that contributes to, but is not required for, the formation of the YdbH-YnbE intermembrane bridge. Affects the function and the structure of the YdbH-YnbE complex. Overexpression of ydbL causes a negative effect on YdbH-YnbE function. The protein is Probable chaperone-like protein YdbL (ydbL) of Escherichia coli (strain K12).